The following is a 118-amino-acid chain: Small ribosomal subunit protein uS13 (118 aa).

The interval 91 to 118 is disordered; it reads HRRGLPVRGQRTKTNARTRKGPRKPIKK.

The protein belongs to the universal ribosomal protein uS13 family. Part of the 30S ribosomal subunit. Forms a loose heterodimer with protein S19. Forms two bridges to the 50S subunit in the 70S ribosome.

Functionally, located at the top of the head of the 30S subunit, it contacts several helices of the 16S rRNA. In the 70S ribosome it contacts the 23S rRNA (bridge B1a) and protein L5 of the 50S subunit (bridge B1b), connecting the 2 subunits; these bridges are implicated in subunit movement. Contacts the tRNAs in the A and P-sites. The protein is Small ribosomal subunit protein uS13 of Hamiltonella defensa subsp. Acyrthosiphon pisum (strain 5AT).